The primary structure comprises 253 residues: Triosephosphate isomerase (253 aa).

9–11 (NWK) is a substrate binding site. His95 acts as the Electrophile in catalysis. The active-site Proton acceptor is the Glu167. Substrate-binding positions include Gly173, Ser213, and 234–235 (GG). Ser213 bears the Phosphoserine mark.

It belongs to the triosephosphate isomerase family. As to quaternary structure, homodimer.

The protein resides in the cytoplasm. The catalysed reaction is D-glyceraldehyde 3-phosphate = dihydroxyacetone phosphate. It participates in carbohydrate biosynthesis; gluconeogenesis. Its pathway is carbohydrate degradation; glycolysis; D-glyceraldehyde 3-phosphate from glycerone phosphate: step 1/1. In terms of biological role, involved in the gluconeogenesis. Catalyzes stereospecifically the conversion of dihydroxyacetone phosphate (DHAP) to D-glyceraldehyde-3-phosphate (G3P). In Bacillus velezensis (strain DSM 23117 / BGSC 10A6 / LMG 26770 / FZB42) (Bacillus amyloliquefaciens subsp. plantarum), this protein is Triosephosphate isomerase.